The primary structure comprises 145 residues: Enhancer of mRNA-decapping protein 2 (145 aa).

2 disordered regions span residues 1–74 and 89–115; these read MGSE…DKAT and PKKKSCKYKKKKTRQYQDRAAASIDSK. Residues 29–42 show a composition bias toward polar residues; the sequence is TKTQILVPPTQSLP. Residues 55 to 73 show a composition bias toward basic and acidic residues; that stretch reads QRREPRERTSKTGHEDDKA. Basic residues predominate over residues 89-102; sequence PKKKSCKYKKKKTR.

This sequence belongs to the EDC family.

It is found in the cytoplasm. Its subcellular location is the nucleus. Functionally, mRNA-binding protein which stimulates mRNA decapping by DCP1 and DCP2. The protein is Enhancer of mRNA-decapping protein 2 (EDC2) of Saccharomyces cerevisiae (strain ATCC 204508 / S288c) (Baker's yeast).